Consider the following 66-residue polypeptide: Small ribosomal subunit protein bS21 (66 aa).

This sequence belongs to the bacterial ribosomal protein bS21 family.

The protein is Small ribosomal subunit protein bS21 of Bdellovibrio bacteriovorus (strain ATCC 15356 / DSM 50701 / NCIMB 9529 / HD100).